Here is a 339-residue protein sequence, read N- to C-terminus: Glyceraldehyde-3-phosphate dehydrogenase (339 aa).

NAD(+) is bound by residues 12–13 (RI), Asp39, Arg84, and Ser127. D-glyceraldehyde 3-phosphate is bound by residues 157–159 (SCT), Thr188, Arg203, 216–217 (TG), and Arg239. Catalysis depends on Cys158, which acts as the Nucleophile. Position 320 (Asn320) interacts with NAD(+).

The protein belongs to the glyceraldehyde-3-phosphate dehydrogenase family. As to quaternary structure, homotetramer.

It is found in the cytoplasm. It catalyses the reaction D-glyceraldehyde 3-phosphate + phosphate + NAD(+) = (2R)-3-phospho-glyceroyl phosphate + NADH + H(+). The protein operates within carbohydrate degradation; glycolysis; pyruvate from D-glyceraldehyde 3-phosphate: step 1/5. Its function is as follows. Catalyzes the oxidative phosphorylation of glyceraldehyde 3-phosphate (G3P) to 1,3-bisphosphoglycerate (BPG) using the cofactor NAD. The first reaction step involves the formation of a hemiacetal intermediate between G3P and a cysteine residue, and this hemiacetal intermediate is then oxidized to a thioester, with concomitant reduction of NAD to NADH. The reduced NADH is then exchanged with the second NAD, and the thioester is attacked by a nucleophilic inorganic phosphate to produce BPG. This Mycobacterium leprae (strain TN) protein is Glyceraldehyde-3-phosphate dehydrogenase (gapA).